The following is a 699-amino-acid chain: Protein STRUBBELIG-RECEPTOR FAMILY 5 (699 aa).

The signal sequence occupies residues Met1 to Ala22. Residues Lys23–Gly273 are Extracellular-facing. 5 LRR repeats span residues Ser93–Asn115, Ile116–Gln136, Asn139–Leu161, Lys163–Thr186, and Ser187–Ala209. N-linked (GlcNAc...) asparagine glycosylation occurs at Asn184. The interval Asn239 to Lys263 is disordered. A helical membrane pass occupies residues Met274–Val294. Residues Ser295–Tyr699 lie on the Cytoplasmic side of the membrane. Ser368 carries the post-translational modification Phosphoserine. The Protein kinase domain maps to Phe404–Met675. ATP-binding positions include Leu410–Val418 and Lys432.

The protein belongs to the protein kinase superfamily. Ser/Thr protein kinase family. As to expression, expressed in leaves and flowers.

It is found in the membrane. The polypeptide is Protein STRUBBELIG-RECEPTOR FAMILY 5 (SRF5) (Arabidopsis thaliana (Mouse-ear cress)).